Reading from the N-terminus, the 60-residue chain is Large ribosomal subunit protein bL32 (60 aa).

This sequence belongs to the bacterial ribosomal protein bL32 family.

This Borreliella burgdorferi (strain ATCC 35210 / DSM 4680 / CIP 102532 / B31) (Borrelia burgdorferi) protein is Large ribosomal subunit protein bL32 (rpmF).